Here is a 425-residue protein sequence, read N- to C-terminus: Histone-binding protein RBBP4 (425 aa).

The residue at position 2 (Ala2) is an N-acetylalanine. At Lys4 the chain carries N6-acetyllysine; alternate. A Glycyl lysine isopeptide (Lys-Gly) (interchain with G-Cter in SUMO2); alternate cross-link involves residue Lys4. Lys4 is covalently cross-linked (Glycyl lysine isopeptide (Lys-Gly) (interchain with G-Cter in ubiquitin); alternate). WD repeat units lie at residues 32-125, 126-175, 176-223, 225-270, 271-314, 315-371, and 372-404; these read YDLV…NHEG, EVNR…RLRG, HQKE…KTIF, GHTA…HSVD, AHTA…HSFE, SHKD…FIHG, and GHTA…VWQM. Ser110 carries the phosphoserine modification. Lys160 bears the N6-acetyllysine; alternate mark. Residue Lys160 forms a Glycyl lysine isopeptide (Lys-Gly) (interchain with G-Cter in SUMO2); alternate linkage. A Phosphoserine modification is found at Ser355.

It belongs to the WD repeat RBAP46/RBAP48/MSI1 family. As to quaternary structure, binds directly to helix 1 of the histone fold of histone H4, a region that is not accessible when H4 is in chromatin. Subunit of the chromatin assembly factor 1 (CAF-1) complex, which is composed of RBBP4, CHAF1B and CHAF1A. Subunit of the core histone deacetylase (HDAC) complex, which is composed of HDAC1, HDAC2, RBBP4 and RBBP7. The core HDAC complex associates with SIN3A, ARID4B/SAP180, SAP18, SAP30, SAP130, SUDS3/SAP45 and possibly ARID4A/RBP1 and ING1 to form the SIN3 HDAC complex. Component of the nucleosome remodeling and deacetylase (NuRD) repressor complex, composed of core proteins MTA1, MTA2, MTA3, RBBP4, RBBP7, HDAC1, HDAC2, MBD2, MBD3, and peripherally associated proteins CDK2AP1, CDK2AP2, GATAD2A, GATAD2B, CHD3, CHD4 and CHD5. The exact stoichiometry of the NuRD complex is unknown, and some subunits such as MBD2 and MBD3, GATAD2A and GATAD2B, and CHD3, CHD4 and CHD5 define mutually exclusive NuRD complexes. Interacts with ZNF512B; the interaction is direct and may play a role in repressing gene expression. The NuRD complex may also interact with MBD3L1 and MBD3L2. Component of the PRC2 complex, which consists of the core subunits EED, EZH1 or EZH2, SUZ12, and RBBP4, and various combinations of accessory subunits including AEBP2, JARID2, PHF19, MTF2 and EPOP. Forms a monomeric PRC2.2 (class 2) complex consisting of at least SUZ12, RBBP4, AEBP2 and JARID2. Forms a dimeric PRC2.1 (class 1, PRC-PCL) complex consisting of at least SUZ12, RBBP4, and PHF19; PHF19 stabilizes the dimeric structure which enhances PRC2 interaction with chromatin. Component of the NURF-1 ISWI chromatin remodeling complex (also called the nucleosome-remodeling factor (NURF) complex) at least composed of SMARCA1 (isoform 2), BPTF, RBBP4 and RBBP7. Within the complex interacts with isoform 2 of SMARCA1. Component of the BPFT-SMARCA1 complex at least composed of SMARCA1 (isoform 1), BPFT, RBBP4 and RBBP7; the complex is catalytically inactive and does not remodel chromatin. Within the complex interacts with isoform 1 of SMARCA1. Interacts with the ISWI chromatin remodeling complex component SMARCA5; the interaction is direct. Interacts with the viral protein-binding domain of the retinoblastoma protein (RB1). Component of the DREAM complex (also named LINC complex) at least composed of E2F4, E2F5, LIN9, LIN37, LIN52, LIN54, MYBL1, MYBL2, RBL1, RBL2, RBBP4, TFDP1 and TFDP2. The complex exists in quiescent cells where it represses cell cycle-dependent genes. It dissociates in S phase when LIN9, LIN37, LIN52 and LIN54 form a subcomplex that binds to MYBL2. Found in a complex composed of at least SINHCAF, SIN3A, HDAC1, SAP30, RBBP4, OGT and TET1. Interacts with ZNF827; the interaction is direct and recruits RBBP4 to telomeres. Interacts with MTA1; the interaction is direct and mutually exclusive with binding histone H4. Interacts with ARMC12 (via ARM domains). Interacts with BRCA1. Interacts with CDK2AP1. Interacts with CREBBP, and this interaction may be enhanced by the binding of phosphorylated CREB1 to CREBBP. Interacts with ERCC6. Interacts with HDAC7. Interacts with PHF6. Interacts with PWWP2B. Interacts with SPEN/MINT. Interacts with SUV39H1.

The protein localises to the nucleus. It is found in the chromosome. Its subcellular location is the telomere. Core histone-binding subunit that may target chromatin assembly factors, chromatin remodeling factors and histone deacetylases to their histone substrates in a manner that is regulated by nucleosomal DNA. Component of the chromatin assembly factor 1 (CAF-1) complex, which is required for chromatin assembly following DNA replication and DNA repair. Component of the core histone deacetylase (HDAC) complex, which promotes histone deacetylation and consequent transcriptional repression. Component of the nucleosome remodeling and histone deacetylase complex (the NuRD complex), which promotes transcriptional repression by histone deacetylation and nucleosome remodeling. Component of the PRC2 complex, which promotes repression of homeotic genes during development. Component of the NURF (nucleosome remodeling factor) complex. This Pongo abelii (Sumatran orangutan) protein is Histone-binding protein RBBP4 (RBBP4).